A 203-amino-acid polypeptide reads, in one-letter code: Proteasome subunit beta 1 (203 aa).

A propeptide spans 1–7 (MTEKLKG) (removed in mature form; by autocatalysis). T8 acts as the Nucleophile in catalysis.

It belongs to the peptidase T1B family. The 20S proteasome core is composed of 14 alpha and 14 beta subunits that assemble into four stacked heptameric rings, resulting in a barrel-shaped structure. The two inner rings, each composed of seven catalytic beta subunits, are sandwiched by two outer rings, each composed of seven alpha subunits. The catalytic chamber with the active sites is on the inside of the barrel. Has a gated structure, the ends of the cylinder being occluded by the N-termini of the alpha-subunits. Is capped at one or both ends by the proteasome regulatory ATPase, PAN.

Its subcellular location is the cytoplasm. It carries out the reaction Cleavage of peptide bonds with very broad specificity.. With respect to regulation, the formation of the proteasomal ATPase PAN-20S proteasome complex, via the docking of the C-termini of PAN into the intersubunit pockets in the alpha-rings, triggers opening of the gate for substrate entry. Interconversion between the open-gate and close-gate conformations leads to a dynamic regulation of the 20S proteasome proteolysis activity. Its function is as follows. Component of the proteasome core, a large protease complex with broad specificity involved in protein degradation. This chain is Proteasome subunit beta 1, found in Thermococcus kodakarensis (strain ATCC BAA-918 / JCM 12380 / KOD1) (Pyrococcus kodakaraensis (strain KOD1)).